Reading from the N-terminus, the 1925-residue chain is Cilia- and flagella-associated protein 65 (1925 aa).

A helical membrane pass occupies residues 188-208 (FFTVIPQPIFLSPGITLTLPI). The MSP domain occupies 877–986 (QLKLDTHKSL…THYMLRLVGV (110 aa)). Residues 1525–1550 (SQQLMRQYHKELQEWKDEKVRQEVEF) are a coiled coil. Disordered regions lie at residues 1645-1667 (KRKA…WGPV) and 1736-1823 (SSWE…PESQ). 2 stretches are compositionally biased toward basic and acidic residues: residues 1649–1661 (PREE…EKSP) and 1739–1762 (EDGK…KKEE). A compositionally biased stretch (acidic residues) spans 1763–1804 (GEEEKGEEEEEELEEEEEEEEETEEEELGKEEIEEKEEERDE).

This sequence belongs to the CFAP65 family. Interacts with CFAP47.

The protein localises to the cell projection. It localises to the cilium. It is found in the flagellum membrane. The protein resides in the cytoplasmic vesicle. Its subcellular location is the secretory vesicle. The protein localises to the acrosome membrane. It localises to the cytoplasm. In terms of biological role, plays a role in flagellar formation and sperm motility. This Homo sapiens (Human) protein is Cilia- and flagella-associated protein 65.